Reading from the N-terminus, the 95-residue chain is Aspartyl/glutamyl-tRNA(Asn/Gln) amidotransferase subunit C (95 aa).

This sequence belongs to the GatC family. As to quaternary structure, heterotrimer of A, B and C subunits.

It carries out the reaction L-glutamyl-tRNA(Gln) + L-glutamine + ATP + H2O = L-glutaminyl-tRNA(Gln) + L-glutamate + ADP + phosphate + H(+). The enzyme catalyses L-aspartyl-tRNA(Asn) + L-glutamine + ATP + H2O = L-asparaginyl-tRNA(Asn) + L-glutamate + ADP + phosphate + 2 H(+). Functionally, allows the formation of correctly charged Asn-tRNA(Asn) or Gln-tRNA(Gln) through the transamidation of misacylated Asp-tRNA(Asn) or Glu-tRNA(Gln) in organisms which lack either or both of asparaginyl-tRNA or glutaminyl-tRNA synthetases. The reaction takes place in the presence of glutamine and ATP through an activated phospho-Asp-tRNA(Asn) or phospho-Glu-tRNA(Gln). The protein is Aspartyl/glutamyl-tRNA(Asn/Gln) amidotransferase subunit C of Dehalococcoides mccartyi (strain ATCC BAA-2266 / KCTC 15142 / 195) (Dehalococcoides ethenogenes (strain 195)).